The following is a 101-amino-acid chain: Secreted enzymes activator (101 aa).

The segment covering 1–10 (MSRRRRRASA) has biased composition (basic residues). Disordered regions lie at residues 1–26 (MSRR…PYGS) and 45–101 (TRLA…NGRG). Positions 45–60 (TRLAASSRASRAAVGS) are enriched in low complexity. The H-T-H motif DNA-binding region spans 55–74 (RAAVGSFDGAKNRPASSRRQ).

Its function is as follows. Increases the production of several extracellular enzymes, like alkaline phosphatase, amylase, protease or lipase. When present in high concentrations, delays the production of pigments and sporulation. This chain is Secreted enzymes activator (saf), found in Streptomyces griseus.